A 92-amino-acid polypeptide reads, in one-letter code: Phospholemman (92 aa).

Residues 1–20 form the signal peptide; the sequence is MAYLHHTLLVCMGLLAMANA. Over 22–35 the chain is Extracellular; sequence APQEQDPFTYDYQS. Residues 36-56 traverse the membrane as a helical segment; that stretch reads LRIGGLIIAGILFILGILIIL. Topologically, residues 57-92 are cytoplasmic; it reads KRGAWERFDTARRTGEPDEEEGTFRSSIRRLSTRRR. The tract at residues 67 to 92 is disordered; the sequence is ARRTGEPDEEEGTFRSSIRRLSTRRR. At threonine 79 the chain carries Phosphothreonine. Residue serine 82 is modified to Phosphoserine. Serine 83 bears the Phosphoserine; by PKA and PKC mark. A compositionally biased stretch (basic residues) spans 83-92; the sequence is SIRRLSTRRR. The residue at position 88 (serine 88) is a Phosphoserine; by PKA. Phosphothreonine; by PKC is present on threonine 89.

It belongs to the FXYD family. Homotetramer. Monomer. Regulatory subunit of the sodium/potassium-transporting ATPase (NKA) which is composed of a catalytic alpha subunit, a non-catalytic beta subunit and an additional regulatory subunit. The monomeric form associates with NKA while the oligomeric form does not. Interacts with the catalytic alpha-1 subunit ATP1A1. Also interacts with the catalytic alpha-2 and alpha-3 subunits ATP1A2 and ATP1A3. Very little interaction with ATP1A1, ATP1A2 or ATP1A3 when phosphorylated at Ser-83. Interacts with the non-catalytic beta-1 subunit ATP1B1. Oxidative stress decreases interaction with ATP1A1 but increases interaction with ATP1B1. Post-translationally, major plasma membrane substrate for cAMP-dependent protein kinase (PKA) and protein kinase C (PKC) in several different tissues. Phosphorylated in response to insulin and adrenergic stimulation. Phosphorylation at Ser-88 stimulates sodium/potassium-transporting ATPase activity while the unphosphorylated form inhibits sodium/potassium-transporting ATPase activity. Phosphorylation increases tetramerization, decreases binding to ATP1A1 and reduces inhibition of ATP1A1 activity. Phosphorylation at Ser-83 leads to greatly reduced interaction with ATP1A1, ATP1A2 and ATP1A3. May be phosphorylated by DMPK. Palmitoylation increases half-life and stability and is enhanced upon phosphorylation at Ser-88 by PKA. In terms of processing, glutathionylated. Expressed in ventricular myocytes (at protein level).

It localises to the cell membrane. It is found in the sarcolemma. Its subcellular location is the apical cell membrane. The protein resides in the membrane. The protein localises to the caveola. It localises to the T-tubule. Its function is as follows. Associates with and regulates the activity of the sodium/potassium-transporting ATPase (NKA) which transports Na(+) out of the cell and K(+) into the cell. Inhibits NKA activity in its unphosphorylated state and stimulates activity when phosphorylated. Reduces glutathionylation of the NKA beta-1 subunit ATP1B1, thus reversing glutathionylation-mediated inhibition of ATP1B1. Contributes to female sexual development by maintaining the excitability of neurons which secrete gonadotropin-releasing hormone. This chain is Phospholemman, found in Oryctolagus cuniculus (Rabbit).